A 150-amino-acid polypeptide reads, in one-letter code: Bcl-2-interacting killer (150 aa).

Positions 51 to 65 (VALRLACIGDEMDLC) match the BH3 motif. A helical membrane pass occupies residues 127–147 (PGQLFPMVLLVFLLLGGAWYL). Positions 127–148 (PGQLFPMVLLVFLLLGGAWYLQ) are leucine-zipper.

Interacts with RHBDL4/RHBDD1. Interacts with BCL2L10/BCL-B. In terms of processing, proteolytically cleaved by RHBDL4/RHBDD1. RHBDL4/RHBDD1-induced cleavage is a necessary step prior its degradation by the proteosome-dependent mechanism. Post-translationally, ubiquitinated by the ECS(ASB11) complex in response to endoplasmic reticulum stress, leading to substrate recognition by the segregase p97/VCP and degradation by the proteasome. As to expression, expressed in testis, kidney, liver, lung and heart.

It localises to the endomembrane system. The protein resides in the mitochondrion membrane. In terms of biological role, accelerates programmed cell death. Binding to the apoptosis repressors Bcl-X(L), BHRF1 or Bcl-2 suppresses this death-promoting activity. The polypeptide is Bcl-2-interacting killer (Bik) (Mus musculus (Mouse)).